The sequence spans 271 residues: Very long chain fatty acid elongase 3 (271 aa).

An N-linked (GlcNAc...) asparagine glycan is attached at N6. The next 7 helical transmembrane spans lie at 30–50 (FLEEYWVSSFLIVVVYLLLIV), 67–87 (PLILWSFFLAIFSILGTLRMW), 116–136 (FWSFLFLLSKVVELGDTAFII), 141–161 (PLIFVHWYHHSTVLLFTSFGY), 165–187 (VPSGGWFMTMNFGVHSVMYTYYT), 199–219 (LPMVITSLQILQMVLGTIFGI), and 236–256 (HFFWSFMLYGTYFILFAHFFH).

Belongs to the ELO family. ELOVL3 subfamily. Interacts with TECR. In terms of processing, N-Glycosylated. Expressed in brown adipose tissue and liver. In the skin, strong expressed in the cells of the inner layer of the outer root sheath of the hair follicles and in the sebocytes of the sebaceous glands. Hardly detectable in the epidermis and not at all in fibroblasts.

Its subcellular location is the endoplasmic reticulum membrane. It carries out the reaction a very-long-chain acyl-CoA + malonyl-CoA + H(+) = a very-long-chain 3-oxoacyl-CoA + CO2 + CoA. The catalysed reaction is eicosanoyl-CoA + malonyl-CoA + H(+) = 3-oxodocosanoyl-CoA + CO2 + CoA. It catalyses the reaction hexadecanoyl-CoA + malonyl-CoA + H(+) = 3-oxooctadecanoyl-CoA + CO2 + CoA. The enzyme catalyses octadecanoyl-CoA + malonyl-CoA + H(+) = 3-oxoeicosanoyl-CoA + CO2 + CoA. It carries out the reaction (9Z)-octadecenoyl-CoA + malonyl-CoA + H(+) = 3-oxo-(11Z)-eicosenoyl-CoA + CO2 + CoA. The catalysed reaction is (9Z,12Z)-octadecadienoyl-CoA + malonyl-CoA + H(+) = (11Z,14Z)-3-oxoicosa-11,14-dienoyl-CoA + CO2 + CoA. It catalyses the reaction (9Z,12Z,15Z)-octadecatrienoyl-CoA + malonyl-CoA + H(+) = (11Z,14Z,17Z)-3-oxoeicosatrienoyl-CoA + CO2 + CoA. The enzyme catalyses docosanoyl-CoA + malonyl-CoA + H(+) = 3-oxotetracosanoyl-CoA + CO2 + CoA. It carries out the reaction tetradecanoyl-CoA + malonyl-CoA + H(+) = 3-oxohexadecanoyl-CoA + CO2 + CoA. It participates in lipid metabolism; polyunsaturated fatty acid biosynthesis. In terms of biological role, catalyzes the first and rate-limiting reaction of the four reactions that constitute the long-chain fatty acids elongation cycle. This endoplasmic reticulum-bound enzymatic process allows the addition of 2 carbons to the chain of long- and very long-chain fatty acids (VLCFAs) per cycle. Condensing enzyme that exhibits activity toward saturated and unsaturated acyl-CoA substrates with higher activity toward C18 acyl-CoAs, especially C18:0 acyl-CoAs. May participate in the production of saturated and monounsaturated VLCFAs of different chain lengths that are involved in multiple biological processes as precursors of membrane lipids and lipid mediators. Participates in the formation of certain VLCFA and triglycerides in certain cells of the hair follicles and the sebaceous glands, required for skin barrier function. Critical enzyme for lipid accumulation and metabolic activity in brown adipocytes during the early phase of the tissue recruitment. Plays a role in lipid storage and in resistance to diet-induced obesity. The protein is Very long chain fatty acid elongase 3 of Mus musculus (Mouse).